A 201-amino-acid polypeptide reads, in one-letter code: Lipopolysaccharide core heptose(II)-phosphate phosphatase (201 aa).

Residues methionine 1–alanine 33 form the signal peptide.

It belongs to the phosphoglycerate mutase family. Ais subfamily.

The protein resides in the periplasm. The protein operates within bacterial outer membrane biogenesis; lipopolysaccharide metabolism. In terms of biological role, catalyzes the dephosphorylation of heptose(II) of the outer membrane lipopolysaccharide core. This Salmonella typhi protein is Lipopolysaccharide core heptose(II)-phosphate phosphatase.